The following is a 136-amino-acid chain: Histone H3.3 (136 aa).

The disordered stretch occupies residues 1–41; the sequence is MARTKQTARKSTGGKAPRKQLASKAARKSAPVTGGVKKPHR. An N6,N6,N6-trimethyllysine; alternate modification is found at lysine 5. The residue at position 5 (lysine 5) is an N6,N6-dimethyllysine; alternate. 2 positions are modified to N6-methyllysine; alternate: lysine 5 and lysine 10. Residue lysine 10 is modified to N6-acetyllysine; alternate. Serine 11 carries the post-translational modification Phosphoserine. N6,N6-dimethyllysine; alternate is present on lysine 15. Residues lysine 15, lysine 19, lysine 24, lysine 28, and lysine 37 each carry the N6-acetyllysine; alternate modification. 4 positions are modified to N6-methyllysine; alternate: lysine 19, lysine 24, lysine 28, and lysine 37. 2 positions are modified to N6,N6,N6-trimethyllysine; alternate: lysine 28 and lysine 37. N6,N6-dimethyllysine; alternate is present on residues lysine 28 and lysine 37. N6-acetyllysine is present on residues lysine 57 and lysine 65. Lysine 80 carries the post-translational modification N6,N6,N6-trimethyllysine; alternate. The residue at position 80 (lysine 80) is an N6,N6-dimethyllysine; alternate. Residue lysine 80 is modified to N6-methyllysine; alternate.

The protein belongs to the histone H3 family. As to quaternary structure, the nucleosome is a histone octamer containing two molecules each of H2A, H2B, H3 and H4 assembled in one H3-H4 heterotetramer and two H2A-H2B heterodimers. The octamer wraps approximately 147 bp of DNA. Post-translationally, phosphorylated to form H3S10ph. H3S10ph promotes subsequent H3K14ac formation and is required for transcriptional activation through TBP recruitment to the promoters. In terms of processing, mono-, di- and trimethylated by the COMPASS complex to form H3K4me1/2/3. H3K4me activates gene expression by regulating transcription elongation and plays a role in telomere length maintenance. H3K4me enrichment correlates with transcription levels, and occurs in a 5' to 3' gradient with H3K4me3 enrichment at the 5'-end of genes, shifting to H3K4me2 and then H3K4me1. Methylated by SET2 to form H3K36me. H3K36me represses gene expression. Methylated by DOT1 to form H3K79me. H3K79me is required for association of SIR proteins with telomeric regions and for telomeric silencing. The COMPASS-mediated formation of H3K4me2/3 and the DOT1-mediated formation of H3K79me require H2BK123ub1. Acetylation of histone H3 leads to transcriptional activation. H3K14ac formation by GCN5 is promoted by H3S10ph. H3K14ac can also be formed by ESA1. H3K56ac formation occurs predominantly in newly synthesized H3 molecules during G1, S and G2/M of the cell cycle and may be involved in DNA repair.

The protein resides in the nucleus. Its subcellular location is the chromosome. Its function is as follows. Core component of nucleosome. Nucleosomes wrap and compact DNA into chromatin, limiting DNA accessibility to the cellular machineries which require DNA as a template. Histones thereby play a central role in transcription regulation, DNA repair, DNA replication and chromosomal stability. DNA accessibility is regulated via a complex set of post-translational modifications of histones, also called histone code, and nucleosome remodeling. This chain is Histone H3.3 (HHT3), found in Meyerozyma guilliermondii (strain ATCC 6260 / CBS 566 / DSM 6381 / JCM 1539 / NBRC 10279 / NRRL Y-324) (Yeast).